A 386-amino-acid chain; its full sequence is Cytochrome b (386 aa).

4 helical membrane passes run 32–52 (LGSL…FLAM), 76–98 (WFIR…IHIG), 113–133 (VWNV…LGYC), and 179–199 (FFAF…MHFM). Residues His-82 and His-96 each coordinate heme b. Positions 183 and 197 each coordinate heme b. A ubiquinone is bound at residue His-202. 4 helical membrane passes run 225-245 (FIFK…LFVF), 289-309 (LLGV…PITD), 321-341 (FSKF…HLGE), and 348-368 (FVVM…VIVP).

The protein belongs to the cytochrome b family. As to quaternary structure, fungal cytochrome b-c1 complex contains 10 subunits; 3 respiratory subunits, 2 core proteins and 5 low-molecular weight proteins. Cytochrome b-c1 complex is a homodimer. Requires heme b as cofactor.

Its subcellular location is the mitochondrion inner membrane. Its function is as follows. Component of the ubiquinol-cytochrome c reductase complex (complex III or cytochrome b-c1 complex) that is part of the mitochondrial respiratory chain. The b-c1 complex mediates electron transfer from ubiquinol to cytochrome c. Contributes to the generation of a proton gradient across the mitochondrial membrane that is then used for ATP synthesis. This chain is Cytochrome b (COB), found in Kluyveromyces lactis (strain ATCC 8585 / CBS 2359 / DSM 70799 / NBRC 1267 / NRRL Y-1140 / WM37) (Yeast).